The following is a 264-amino-acid chain: Thymidylate synthase (264 aa).

Arg-21 contributes to the dUMP binding site. His-51 is a (6R)-5,10-methylene-5,6,7,8-tetrahydrofolate binding site. Arg-126–Arg-127 contacts dUMP. Cys-146 functions as the Nucleophile in the catalytic mechanism. Residues Arg-166 to Asp-169, Asn-177, and His-207 to Tyr-209 each bind dUMP. Asp-169 is a binding site for (6R)-5,10-methylene-5,6,7,8-tetrahydrofolate. Ala-263 is a binding site for (6R)-5,10-methylene-5,6,7,8-tetrahydrofolate.

This sequence belongs to the thymidylate synthase family. Bacterial-type ThyA subfamily. As to quaternary structure, homodimer.

The protein resides in the cytoplasm. It catalyses the reaction dUMP + (6R)-5,10-methylene-5,6,7,8-tetrahydrofolate = 7,8-dihydrofolate + dTMP. It participates in pyrimidine metabolism; dTTP biosynthesis. Its function is as follows. Catalyzes the reductive methylation of 2'-deoxyuridine-5'-monophosphate (dUMP) to 2'-deoxythymidine-5'-monophosphate (dTMP) while utilizing 5,10-methylenetetrahydrofolate (mTHF) as the methyl donor and reductant in the reaction, yielding dihydrofolate (DHF) as a by-product. This enzymatic reaction provides an intracellular de novo source of dTMP, an essential precursor for DNA biosynthesis. This Vesicomyosocius okutanii subsp. Calyptogena okutanii (strain HA) protein is Thymidylate synthase.